The sequence spans 96 residues: Large ribosomal subunit protein uL23 (96 aa).

The protein belongs to the universal ribosomal protein uL23 family. In terms of assembly, part of the 50S ribosomal subunit. Contacts protein L29, and trigger factor when it is bound to the ribosome.

In terms of biological role, one of the early assembly proteins it binds 23S rRNA. One of the proteins that surrounds the polypeptide exit tunnel on the outside of the ribosome. Forms the main docking site for trigger factor binding to the ribosome. This is Large ribosomal subunit protein uL23 from Onion yellows phytoplasma (strain OY-M).